Consider the following 157-residue polypeptide: UPF0225 protein PA1039 (157 aa).

Belongs to the UPF0225 family.

The polypeptide is UPF0225 protein PA1039 (Pseudomonas aeruginosa (strain ATCC 15692 / DSM 22644 / CIP 104116 / JCM 14847 / LMG 12228 / 1C / PRS 101 / PAO1)).